Reading from the N-terminus, the 511-residue chain is ADP,ATP carrier protein 4 (511 aa).

12 helical membrane passes run 34-54 (VSKF…QNLI), 71-91 (ISFL…AIYV), 102-122 (IFYL…YVIF), 157-177 (FSLF…LLFW), 192-212 (FYPL…QFLE), 231-251 (FHTL…IIAI), 296-316 (LIAT…GPWK), 330-350 (AAFI…FVVL), 361-381 (FTAA…FFAV), 390-410 (LIIA…IGAI), 453-473 (LGKS…PSAS), and 476-496 (SISI…LWAT).

Belongs to the ADP/ATP translocase tlc family.

The protein resides in the cell membrane. Functionally, provides the rickettsial cell with host ATP in exchange for rickettsial ADP. This is an obligate exchange system. This energy acquiring activity is an important component of rickettsial parasitism. The polypeptide is ADP,ATP carrier protein 4 (tlcD) (Rickettsia felis (strain ATCC VR-1525 / URRWXCal2) (Rickettsia azadi)).